A 309-amino-acid chain; its full sequence is Potassium channel subfamily K member 16 (309 aa).

Over 1–13 the chain is Cytoplasmic; sequence MPSAGLCSCWGGR. Residues 14-34 traverse the membrane as a helical segment; sequence VLPLLLAYVCYLLLGATIFQL. The segment at residues 98–116 is an intramembrane region (pore-forming); sequence SFFFAGTVVTTIGYGNLAP. K(+) contacts are provided by threonine 108, isoleucine 109, glycine 110, and tyrosine 111. The interval 108–113 is selectivity filter 1; the sequence is TIGYGN. The chain crosses the membrane as a helical span at residues 120–140; sequence AGQVFCVFYALLGIPLNVIFL. Residues 141-165 are Cytoplasmic-facing; that stretch reads NHLGTGLRAHLAAIERWEDRPRRSQ. The chain crosses the membrane as a helical span at residues 166-186; sequence VLQVLGLALFLTLGTLVILIF. Positions 202-221 form an intramembrane region, pore-forming; it reads GFYFAFITLSTIGFGDYVVG. The K(+) site is built by threonine 212, isoleucine 213, glycine 214, and phenylalanine 215. The selectivity filter 2 stretch occupies residues 212–217; the sequence is TIGFGD. The chain crosses the membrane as a helical span at residues 238–258; sequence IWILLGLAWLALILPLGPLLL. The Cytoplasmic portion of the chain corresponds to 259–309; the sequence is HRCCQLWLLSLRQGCGAKAAPGRRPRRGSTAARGVQVTPQDFPISKKGLGS.

This sequence belongs to the two pore domain potassium channel (TC 1.A.1.8) family. As to quaternary structure, homodimer; disulfide-linked. Heterodimer with KCNK17 and KCNK5. In terms of tissue distribution, highly expressed in pancreas, in both endocrine (alpha, beta, gamma, delta, and epsilon) and exocrine (acinar and ductal) cells. Expressed in pacreatic beta-cells (at protein level). Expressed in pacreatic delta-cells (at protein level). Not detectable in the other tissues tested.

The protein localises to the endoplasmic reticulum membrane. It is found in the cell membrane. It localises to the mitochondrion inner membrane. It carries out the reaction K(+)(in) = K(+)(out). It catalyses the reaction Rb(+)(in) = Rb(+)(out). The catalysed reaction is Cs(+)(in) = Cs(+)(out). With respect to regulation, the channel conductance is stimulated by extracellular alkaline pH. Inhibited by Ba(2+) ions, quinine, quinidine, chloroform and halothane. Functionally, k(+) channel that conducts voltage-dependent outward rectifying currents upon membrane depolarization. Voltage sensing is coupled to K(+) electrochemical gradient in an 'ion flux gating' mode where outward but not inward ion flow opens the gate. Homo- and heterodimerizes to form functional channels with distinct regulatory and gating properties. In pancreatic islets, conducts K(+) countercurrents for Ca(2+) release from the endoplasmic reticulum (ER) and regulates the frequency and duration of cytosolic Ca(2+) oscillations coupled to secretion of pancreatic hormones. In pancreatic beta cells, drives ER Ca(2+) efflux, which in turn activates Ca(2+)-dependent plasma membrane K(+) slow currents and cytosolic Ca(2+) influx, overall contributing to synchronous cytosolic Ca(2+) oscillations. Limits glucose-induced cytosolic Ca(2+) oscillations coupled to second-phase INS secretion. Contributes to beta cell adaptation to acute inflammation by maintaining normal cytosolic Ca(2+) levels and INS secretion. May regulate beta cell mitochondrial Ca(2+) levels either indirectly via ER Ca(2+) efflux or directly by hyperpolarizing the mitochondrial membrane potential. Limits mitochondrial Ca(2+) oscillations and ATP production involved in glucose homeostasis upon metabolic stress. In pancreatic delta cells, limits Ca(2+)-induced Ca(2+)-release involved in somatostatin secretion and modulates islet paracrine signaling involved in glucagon secretion. Permeable to other monovalent cations such as Rb(+) and Cs(+). In Homo sapiens (Human), this protein is Potassium channel subfamily K member 16.